Consider the following 262-residue polypeptide: Phosphatidylserine decarboxylase proenzyme (262 aa).

Residues Asp86, His142, and Ser226 each act as charge relay system; for autoendoproteolytic cleavage activity in the active site. Ser226 functions as the Schiff-base intermediate with substrate; via pyruvic acid; for decarboxylase activity in the catalytic mechanism. Ser226 carries the post-translational modification Pyruvic acid (Ser); by autocatalysis.

This sequence belongs to the phosphatidylserine decarboxylase family. PSD-B subfamily. Prokaryotic type I sub-subfamily. In terms of assembly, heterodimer of a large membrane-associated beta subunit and a small pyruvoyl-containing alpha subunit. Requires pyruvate as cofactor. Is synthesized initially as an inactive proenzyme. Formation of the active enzyme involves a self-maturation process in which the active site pyruvoyl group is generated from an internal serine residue via an autocatalytic post-translational modification. Two non-identical subunits are generated from the proenzyme in this reaction, and the pyruvate is formed at the N-terminus of the alpha chain, which is derived from the carboxyl end of the proenzyme. The autoendoproteolytic cleavage occurs by a canonical serine protease mechanism, in which the side chain hydroxyl group of the serine supplies its oxygen atom to form the C-terminus of the beta chain, while the remainder of the serine residue undergoes an oxidative deamination to produce ammonia and the pyruvoyl prosthetic group on the alpha chain. During this reaction, the Ser that is part of the protease active site of the proenzyme becomes the pyruvoyl prosthetic group, which constitutes an essential element of the active site of the mature decarboxylase.

Its subcellular location is the cell membrane. The catalysed reaction is a 1,2-diacyl-sn-glycero-3-phospho-L-serine + H(+) = a 1,2-diacyl-sn-glycero-3-phosphoethanolamine + CO2. Its pathway is phospholipid metabolism; phosphatidylethanolamine biosynthesis; phosphatidylethanolamine from CDP-diacylglycerol: step 2/2. Functionally, catalyzes the formation of phosphatidylethanolamine (PtdEtn) from phosphatidylserine (PtdSer). This is Phosphatidylserine decarboxylase proenzyme from Bacillus cereus (strain ZK / E33L).